The following is a 785-amino-acid chain: B-cell scaffold protein with ankyrin repeats (785 aa).

The segment at 1–154 (MLPAAPGKGL…DYISVIQSII (154 aa)) is interaction with ITPR2. One can recognise a TIR domain in the interval 25–153 (NTKDIIMIYE…EDYISVIQSI (129 aa)). Positions 200–327 (VLPTEIPCEN…EIPYYEFQSL (128 aa)) constitute a DBB domain. 2 ANK repeats span residues 342-371 (ELPT…ATWA) and 378-408 (EGSD…EIDI). Disordered stretches follow at residues 433 to 480 (PAFH…SESS), 493 to 514 (GADP…LPPP), 538 to 578 (QMER…EDPY), and 606 to 625 (FIIN…PPKE). Residues 553-568 (ETGDEPKGEKEKKEEE) are compositionally biased toward basic and acidic residues. Residues 569–578 (KEQEEEEDPY) show a composition bias toward acidic residues. Over residues 611-621 (PPAPTPRPTSI) the composition is skewed to pro residues.

Interacts with LYN, ITPR1 and ITPR2. Phosphorylated on tyrosines upon BCR activation. As to expression, expressed in B-cell but not T-cell or myeloid cell lines. Highest expression in CD19(+) B-cells, with very low expression in other cell populations.

Its function is as follows. Involved in B-cell receptor (BCR)-induced Ca(2+) mobilization from intracellular stores. Promotes Lyn-mediated phosphorylation of IP3 receptors 1 and 2. In Homo sapiens (Human), this protein is B-cell scaffold protein with ankyrin repeats (BANK1).